A 573-amino-acid chain; its full sequence is Sulfite reductase [NADPH] hemoprotein beta-component (573 aa).

A disordered region spans residues 1 to 20 (MAKVELKAPDGPPSDVERIK). [4Fe-4S] cluster-binding residues include C438, C444, C483, and C487. Residue C487 coordinates siroheme.

Belongs to the nitrite and sulfite reductase 4Fe-4S domain family. As to quaternary structure, alpha(8)-beta(8). The alpha component is a flavoprotein, the beta component is a hemoprotein. Siroheme is required as a cofactor. [4Fe-4S] cluster serves as cofactor.

It carries out the reaction hydrogen sulfide + 3 NADP(+) + 3 H2O = sulfite + 3 NADPH + 4 H(+). Its pathway is sulfur metabolism; hydrogen sulfide biosynthesis; hydrogen sulfide from sulfite (NADPH route): step 1/1. Functionally, component of the sulfite reductase complex that catalyzes the 6-electron reduction of sulfite to sulfide. This is one of several activities required for the biosynthesis of L-cysteine from sulfate. This Geobacillus kaustophilus (strain HTA426) protein is Sulfite reductase [NADPH] hemoprotein beta-component.